Here is a 750-residue protein sequence, read N- to C-terminus: Neprilysin (750 aa).

The span at 1–14 (MGKSESQMDITDIN) shows a compositional bias: polar residues. The segment at 1 to 20 (MGKSESQMDITDINTPKPKK) is disordered. A lipid anchor (N-myristoyl glycine) is attached at Gly-2. The Cytoplasmic segment spans residues 2-28 (GKSESQMDITDINTPKPKKKQRWTPLE). 2 positions are modified to phosphoserine: Ser-4 and Ser-6. A Stop-transfer sequence motif is present at residues 16–23 (PKPKKKQR). Residues 29 to 51 (ISLSVLVLLLTIIAVTMIALYAT) traverse the membrane as a helical; Signal-anchor for type II membrane protein segment. The Extracellular portion of the chain corresponds to 52–750 (YDDGICKSSD…MNPEKKCRVW (699 aa)). Residues 56 to 750 (ICKSSDCIKS…MNPEKKCRVW (695 aa)) form the Peptidase M13 domain. 6 disulfides stabilise this stretch: Cys-57–Cys-62, Cys-80–Cys-735, Cys-88–Cys-695, Cys-143–Cys-411, Cys-234–Cys-242, and Cys-621–Cys-747. Arg-103 is an a peptide binding site. An N-linked (GlcNAc...) asparagine glycan is attached at Asn-145. 2 N-linked (GlcNAc...) asparagine glycosylation sites follow: Asn-285 and Asn-325. His-584 lines the Zn(2+) pocket. Glu-585 is an active-site residue. A Zn(2+)-binding site is contributed by His-588. An N-linked (GlcNAc...) asparagine glycan is attached at Asn-628. Glu-647 serves as a coordination point for Zn(2+). Asp-651 acts as the Proton donor in catalysis.

Belongs to the peptidase M13 family. Zn(2+) is required as a cofactor. Post-translationally, myristoylation is a determinant of membrane targeting. Glycosylation at Asn-628 is necessary both for surface expression and neutral endopeptidase activity.

It is found in the cell membrane. The enzyme catalyses Preferential cleavage of polypeptides between hydrophobic residues, particularly with Phe or Tyr at P1'.. It catalyses the reaction substance P + H2O = substance P(1-9) + L-Leu-L-Met-NH2. It carries out the reaction substance P + H2O = substance P(1-7) + L-Phe-Gly-L-Leu-L-Met-NH2. The catalysed reaction is neurotensin + H2O = neurotensin(1-11) + L-isoleucyl-L-leucine. The enzyme catalyses neurotensin + H2O = neurotensin(1-10) + L-tyrosyl-L-isoleucyl-L-leucine. Its activity is regulated as follows. Inhibited in a dose dependent manner by opiorphin. Activated by K49-P1-20, a twenty-residue synthetic peptide shortened from the snake B.asper myotoxin II. In terms of biological role, thermolysin-like specificity, but is almost confined on acting on polypeptides of up to 30 amino acids. Biologically important in the destruction of opioid peptides such as Met- and Leu-enkephalins by cleavage of a Gly-Phe bond. Catalyzes cleavage of bradykinin, substance P and neurotensin peptides. Able to cleave angiotensin-1, angiotensin-2 and angiotensin 1-9. Involved in the degradation of atrial natriuretic factor (ANF) and brain natriuretic factor (BNP(1-32)). Displays UV-inducible elastase activity toward skin preelastic and elastic fibers. The chain is Neprilysin from Homo sapiens (Human).